The primary structure comprises 244 residues: Carboxy-S-adenosyl-L-methionine synthase (244 aa).

S-adenosyl-L-methionine contacts are provided by residues tyrosine 40, 65–67 (GCS), 90–91 (DN), 119–120 (DL), asparagine 134, and arginine 201.

The protein belongs to the class I-like SAM-binding methyltransferase superfamily. Cx-SAM synthase family. In terms of assembly, homodimer.

It carries out the reaction prephenate + S-adenosyl-L-methionine = carboxy-S-adenosyl-L-methionine + 3-phenylpyruvate + H2O. Functionally, catalyzes the conversion of S-adenosyl-L-methionine (SAM) to carboxy-S-adenosyl-L-methionine (Cx-SAM). This is Carboxy-S-adenosyl-L-methionine synthase from Geobacter metallireducens (strain ATCC 53774 / DSM 7210 / GS-15).